Consider the following 702-residue polypeptide: BRCA1-associated RING domain protein 1 (702 aa).

The RING-type zinc finger occupies 18 to 67 (CVKCKKPRGDLQYLGSSCKHAYCWECIATFQQKPSGKRSSVARHMCPSCA). Disordered regions lie at residues 153–205 (DENR…TSVK) and 281–346 (ASMS…YGTR). Residues 174-188 (ASPTRNSTKRPSTVS) are compositionally biased toward polar residues. A compositionally biased stretch (basic and acidic residues) spans 312–321 (IKSDKIERRS). ANK repeat units lie at residues 347–376 (RGEAVLVNSIRNNRIPQLRSAVEAGTCVNE), 379–408 (DGKTPLYVAVENSSLEAVKILVEAGAVINA), and 413–442 (TLETTLHEAVRRQNTQIVEYLLSKGASIKI). Residues 601 to 702 (MQPKLFAGCK…LGCSITTPPH (102 aa)) form the BRCT domain.

Heterodimer (via RING-type zinc finger) with brc-1 to form the core CeBCD complex. Brc-1-brd-1 heterodimer-containing CeBCD complexes bound to chromatin are activated as an E3-ubiquitin ligase in response to DNA damage. The heterodimer interacts with the recombinase rad-51 following ionizing irradiation; the interaction is direct. The heterodimer interacts the E2-ubiquitin-conjugating enzyme let-70 following ionizing irradiation. The heterodimer interacts with the pro-crossover proteins msh-5 and syp-3. Interacts with smt-3, tac-1 and ubc-9. In terms of processing, autoubiquitinated. Post-translationally, phosphorylation of CeBCD complexes is required for E3 ubiquitin-protein ligase activity.

It localises to the cytoplasm. The protein resides in the nucleus. The protein localises to the chromosome. It catalyses the reaction S-ubiquitinyl-[E2 ubiquitin-conjugating enzyme]-L-cysteine + [acceptor protein]-L-lysine = [E2 ubiquitin-conjugating enzyme]-L-cysteine + N(6)-ubiquitinyl-[acceptor protein]-L-lysine.. It functions in the pathway protein modification; protein ubiquitination. E3 ubiquitin-protein ligase activity of CeBCD complexes occurs at DNA damage sites. Following DNA damage, E3 ubiquitin-protein ligase activity is reduced by caffeine treatment (inhibitor of ATM and ATK kinase activity). In terms of biological role, constituent of the CeBCD complex that possesses E3 ubiquitin-protein ligase activity. When bound to chromatin, the brc-1-brd-1 heterodimer within the CeBCD complex is inactive during normal conditions, but in response to DNA damage, the brc-1-brd-1 heterodimer associates with other proteins such as the recombinase rad-51 or the E2-ubiquitin-conjugating enzyme let-70, which activate the CeBCD complex as an E3-ubiquitin ligase. Moreover, association between the brc-1-brd-1 heterodimer and rad-51 and let-70, probably requires DNA checkpoint proteins such as atl-1 and mre-11 in order to induce ubiquitination at DNA damage sites. To this end, the brc-1-brd-1 heterodimer coordinates a diverse range of cellular pathways such as DNA damage repair, ubiquitination and transcriptional regulation to maintain genomic stability. Plays a role in triggering cellular responses at damage sites in response to DNA damage that may be induced by ionizing radiation for example. In particular, protects against chromosome non-disjunction and nuclear fragmentation during meiotic double-strand break repair to ensure sister chromatid recombination and aid chromosome stability. This is BRCA1-associated RING domain protein 1 from Caenorhabditis elegans.